Consider the following 176-residue polypeptide: Transcription termination/antitermination protein NusG (176 aa).

The region spanning 125–149 (GEVVRVVEGPFANFTATVEEYDVEH) is the KOW domain.

The protein belongs to the NusG family.

Functionally, participates in transcription elongation, termination and antitermination. This chain is Transcription termination/antitermination protein NusG, found in Helicobacter pylori (strain ATCC 700392 / 26695) (Campylobacter pylori).